The sequence spans 425 residues: Dipeptidase tcpJ (425 aa).

Residues histidine 46, aspartate 48, and glutamate 158 each coordinate Zn(2+). The substrate site is built by histidine 185, arginine 259, and aspartate 318.

The protein belongs to the metallo-dependent hydrolases superfamily. Peptidase M19 family. Zn(2+) is required as a cofactor.

It carries out the reaction an L-aminoacyl-L-amino acid + H2O = 2 an L-alpha-amino acid. Its function is as follows. Dipeptidase; part of the gene cluster that mediates the biosynthesis of an unusual class of epipolythiodioxopiperazines (ETPs) lacking the reactive thiol group important for toxicity. Firstly, L-tyrosine is prenylated by tcpD, before undergoing condensation with L-glycine in a reaction catalyzed by the NRPS tcpP leading to the diketopiperazine (DKP) backbone. Afterwards the alpha-carbon of tyrosine is oxidized by the cytochrome P450 tcpC to form a hydroxyl group. However, in contrast other ETP biosynthesis pathways studied so far, tcpC is not able to bishydroxylate the DKP at both alpha-carbon positions, but hydroxylates the alpha-carbon of the tyrosine part and the nitrogen of the glycine part. The next steps involve an alpha,beta-elimination reaction catalyzed by tcpI, a methylation by the methyltransferase tcpN the action of the four enzyme cascade tcpG/K/J/I. Due to a dysfunctional cytochrome P450 monooxygenase tcpC, the pathway leads to the biosynthesis of probable non-toxic metabolites lacking the reactive thiol group. The sequence is that of Dipeptidase tcpJ from Claviceps purpurea (strain 20.1) (Ergot fungus).